We begin with the raw amino-acid sequence, 295 residues long: Ribosomal RNA small subunit methyltransferase A (295 aa).

N29, L31, G56, E77, D102, and N128 together coordinate S-adenosyl-L-methionine.

The protein belongs to the class I-like SAM-binding methyltransferase superfamily. rRNA adenine N(6)-methyltransferase family. RsmA subfamily.

Its subcellular location is the cytoplasm. The catalysed reaction is adenosine(1518)/adenosine(1519) in 16S rRNA + 4 S-adenosyl-L-methionine = N(6)-dimethyladenosine(1518)/N(6)-dimethyladenosine(1519) in 16S rRNA + 4 S-adenosyl-L-homocysteine + 4 H(+). Its function is as follows. Specifically dimethylates two adjacent adenosines (A1518 and A1519) in the loop of a conserved hairpin near the 3'-end of 16S rRNA in the 30S particle. May play a critical role in biogenesis of 30S subunits. This Listeria welshimeri serovar 6b (strain ATCC 35897 / DSM 20650 / CCUG 15529 / CIP 8149 / NCTC 11857 / SLCC 5334 / V8) protein is Ribosomal RNA small subunit methyltransferase A.